The primary structure comprises 932 residues: Calpain-like protease palB/cpr-8 (932 aa).

In terms of domain architecture, Calpain catalytic spans 96–419; sequence KLHGNIFPPW…FDSLYVNWSP (324 aa). Residues C178, H346, and N366 contribute to the active site. A disordered region spans residues 890–932; it reads QGHVTEGSDDDGGGGGGGGGGVHVEISSDGVVSIGEWEVADED. The segment covering 902–911 has biased composition (gly residues); the sequence is GGGGGGGGGV.

This sequence belongs to the peptidase C2 family. PalB/RIM13 subfamily.

In terms of biological role, required for the proteolytic cleavage of the transcription factor pacc-1 in response to alkaline ambient pH. The sequence is that of Calpain-like protease palB/cpr-8 (cpr-8) from Neurospora crassa (strain ATCC 24698 / 74-OR23-1A / CBS 708.71 / DSM 1257 / FGSC 987).